We begin with the raw amino-acid sequence, 805 residues long: Phenylalanine--tRNA ligase beta subunit (805 aa).

Positions 39-148 constitute a tRNA-binding domain; the sequence is APPFTGVVVA…AALRPGTDIR (110 aa). The B5 domain occupies 399–474; sequence PVREPVRMRL…RVYGFERIPD (76 aa). Mg(2+) is bound by residues D452, D458, E461, and E462. An FDX-ACB domain is found at 703 to 804; it reads SRQPAVVRDL…LVAAHNARQR (102 aa).

It belongs to the phenylalanyl-tRNA synthetase beta subunit family. Type 1 subfamily. As to quaternary structure, tetramer of two alpha and two beta subunits. Requires Mg(2+) as cofactor.

It localises to the cytoplasm. The enzyme catalyses tRNA(Phe) + L-phenylalanine + ATP = L-phenylalanyl-tRNA(Phe) + AMP + diphosphate + H(+). The sequence is that of Phenylalanine--tRNA ligase beta subunit from Bordetella bronchiseptica (strain ATCC BAA-588 / NCTC 13252 / RB50) (Alcaligenes bronchisepticus).